The sequence spans 356 residues: Phosphoserine aminotransferase (356 aa).

Position 41 (Arg-41) interacts with L-glutamate. Residues 75 to 76 (AS), Trp-99, Thr-147, Asp-166, and Gln-189 contribute to the pyridoxal 5'-phosphate site. Position 190 is an N6-(pyridoxal phosphate)lysine (Lys-190). 231-232 (NT) contributes to the pyridoxal 5'-phosphate binding site.

It belongs to the class-V pyridoxal-phosphate-dependent aminotransferase family. SerC subfamily. Homodimer. It depends on pyridoxal 5'-phosphate as a cofactor.

It localises to the cytoplasm. The catalysed reaction is O-phospho-L-serine + 2-oxoglutarate = 3-phosphooxypyruvate + L-glutamate. The enzyme catalyses 4-(phosphooxy)-L-threonine + 2-oxoglutarate = (R)-3-hydroxy-2-oxo-4-phosphooxybutanoate + L-glutamate. Its pathway is amino-acid biosynthesis; L-serine biosynthesis; L-serine from 3-phospho-D-glycerate: step 2/3. It functions in the pathway cofactor biosynthesis; pyridoxine 5'-phosphate biosynthesis; pyridoxine 5'-phosphate from D-erythrose 4-phosphate: step 3/5. Functionally, catalyzes the reversible conversion of 3-phosphohydroxypyruvate to phosphoserine and of 3-hydroxy-2-oxo-4-phosphonooxybutanoate to phosphohydroxythreonine. The chain is Phosphoserine aminotransferase from Phocaeicola vulgatus (strain ATCC 8482 / DSM 1447 / JCM 5826 / CCUG 4940 / NBRC 14291 / NCTC 11154) (Bacteroides vulgatus).